The chain runs to 245 residues: 1-(5-phosphoribosyl)-5-[(5-phosphoribosylamino)methylideneamino] imidazole-4-carboxamide isomerase (245 aa).

Asp-15 acts as the Proton acceptor in catalysis. Residue Asp-135 is the Proton donor of the active site.

It belongs to the HisA/HisF family.

It is found in the cytoplasm. The catalysed reaction is 1-(5-phospho-beta-D-ribosyl)-5-[(5-phospho-beta-D-ribosylamino)methylideneamino]imidazole-4-carboxamide = 5-[(5-phospho-1-deoxy-D-ribulos-1-ylimino)methylamino]-1-(5-phospho-beta-D-ribosyl)imidazole-4-carboxamide. It functions in the pathway amino-acid biosynthesis; L-histidine biosynthesis; L-histidine from 5-phospho-alpha-D-ribose 1-diphosphate: step 4/9. The polypeptide is 1-(5-phosphoribosyl)-5-[(5-phosphoribosylamino)methylideneamino] imidazole-4-carboxamide isomerase (Haloquadratum walsbyi (strain DSM 16790 / HBSQ001)).